A 356-amino-acid chain; its full sequence is 3-deoxy-alpha-D-manno-octulosonate 8-oxidase (356 aa).

The protein belongs to the iron-containing alcohol dehydrogenase family. It depends on a divalent metal cation as a cofactor.

The enzyme catalyses 3-deoxy-alpha-D-manno-oct-2-ulosonate + O2 = 3,8-dideoxy-8-oxo-alpha-D-manno-octulosonate + H2O2. The protein operates within bacterial outer membrane biogenesis; lipopolysaccharide biosynthesis. Inhibited by EDTA. In terms of biological role, catalyzes the first step of the biosynthesis of Kdo8N (8-amino-3,8-dideoxy-D-manno-octulosonate) from Kdo (3-deoxy-D-manno-octulosonate). This is 3-deoxy-alpha-D-manno-octulosonate 8-oxidase from Shewanella oneidensis (strain ATCC 700550 / JCM 31522 / CIP 106686 / LMG 19005 / NCIMB 14063 / MR-1).